The sequence spans 61 residues: Large ribosomal subunit protein bL32 (61 aa).

Residues 1–22 (MAVPKKKTSKSRRDMRRSHHAL) are compositionally biased toward basic residues. Residues 1-27 (MAVPKKKTSKSRRDMRRSHHALKPSAY) are disordered.

This sequence belongs to the bacterial ribosomal protein bL32 family.

The polypeptide is Large ribosomal subunit protein bL32 (Rhodospirillum rubrum (strain ATCC 11170 / ATH 1.1.1 / DSM 467 / LMG 4362 / NCIMB 8255 / S1)).